Consider the following 192-residue polypeptide: uncharacterized protein (192 aa).

Residues phenylalanine 7–phenylalanine 29 form a helical; Signal-anchor membrane-spanning segment. A helical transmembrane segment spans residues tyrosine 51 to isoleucine 67.

Its subcellular location is the membrane. This is an uncharacterized protein from Saccharomyces cerevisiae (strain ATCC 204508 / S288c) (Baker's yeast).